The primary structure comprises 185 residues: A-type ATP synthase subunit E (185 aa).

Belongs to the V-ATPase E subunit family. As to quaternary structure, has multiple subunits with at least A(3), B(3), C, D, E, F, H, I and proteolipid K(x).

Its subcellular location is the cell membrane. Its function is as follows. Component of the A-type ATP synthase that produces ATP from ADP in the presence of a proton gradient across the membrane. In Thermoplasma volcanium (strain ATCC 51530 / DSM 4299 / JCM 9571 / NBRC 15438 / GSS1), this protein is A-type ATP synthase subunit E.